A 196-amino-acid polypeptide reads, in one-letter code: Large ribosomal subunit protein uL6 (196 aa).

This sequence belongs to the universal ribosomal protein uL6 family. In terms of assembly, part of the 50S ribosomal subunit.

Functionally, this protein binds to the 23S rRNA, and is important in its secondary structure. It is located near the subunit interface in the base of the L7/L12 stalk, and near the tRNA binding site of the peptidyltransferase center. In Pyrobaculum aerophilum (strain ATCC 51768 / DSM 7523 / JCM 9630 / CIP 104966 / NBRC 100827 / IM2), this protein is Large ribosomal subunit protein uL6.